The following is a 66-amino-acid chain: Large ribosomal subunit protein bL33c (66 aa).

This sequence belongs to the bacterial ribosomal protein bL33 family.

It is found in the plastid. It localises to the chloroplast. The polypeptide is Large ribosomal subunit protein bL33c (Calycanthus floridus var. glaucus (Eastern sweetshrub)).